Consider the following 324-residue polypeptide: bZIP transcription factor 46 (324 aa).

The tract at residues 106 to 127 is disordered; that stretch reads LGGSDDEDPAAAAAAAAPAQRQ. Over residues 115-124 the composition is skewed to low complexity; sequence AAAAAAAAPA. In terms of domain architecture, bZIP spans 242–287; that stretch reads VERRQRRMIKNRESAARSRARKQAYIMELEAEVAKLKEQKAELQKK. The basic motif stretch occupies residues 244-263; the sequence is RRQRRMIKNRESAARSRARK. A leucine-zipper region spans residues 270 to 284; it reads LEAEVAKLKEQKAEL.

Interacts with MODD. Interacts with SAPK2, SAPK6 and SAPK9. In terms of processing, phosphorylated on serine and threonine residues by SAPK2, SAPK6 and SAPK9. Phosphorylation is required for full transactivation activity. Expressed in roots, shoots, leaves, flag leaves, stems, flowers and panicles. Widely expressed.

The protein resides in the nucleus. Transcription factor involved in abscisic acid (ABA) signaling pathway. Transcription factor activity is fully activated by ABA. Acts as a positive regulator of the expression of abiotic stress-responsive genes through an ABA-dependent signaling pathway. Acts as a positive regulator of ABA signaling and drought stress tolerance. Plays an important role in ABA and auxin responses. Involved in ABA signaling and stress responses by directly binding to the ABA-responsive element (ABRE)-containing genes, especially WRKY family genes. Modulates response to auxin. Suppresses auxin signaling by targeting ABRE-containing genes related to auxin metabolism or signaling. In Oryza sativa subsp. japonica (Rice), this protein is bZIP transcription factor 46.